A 149-amino-acid chain; its full sequence is Transcriptional repressor NrdR (149 aa).

Residues 3 to 34 (CPFCSENDTKVIDSRLVADGHQVRRRRQCLAC) fold into a zinc finger. Residues 49–139 (PKVIKSNGNR…VYRSFEDIRE (91 aa)) form the ATP-cone domain.

Belongs to the NrdR family. Zn(2+) is required as a cofactor.

In terms of biological role, negatively regulates transcription of bacterial ribonucleotide reductase nrd genes and operons by binding to NrdR-boxes. This Vibrio atlanticus (strain LGP32) (Vibrio splendidus (strain Mel32)) protein is Transcriptional repressor NrdR.